Consider the following 116-residue polypeptide: Large ribosomal subunit protein bL17 (116 aa).

It belongs to the bacterial ribosomal protein bL17 family. Part of the 50S ribosomal subunit. Contacts protein L32.

This is Large ribosomal subunit protein bL17 from Chloroflexus aurantiacus (strain ATCC 29366 / DSM 635 / J-10-fl).